The following is an 851-amino-acid chain: Periplasmic nitrate reductase (851 aa).

Positions 1 to 29 (MQSNRRDFLKAQALAASAAAAGIPIVVEA) form a signal peptide, tat-type signal. The 4Fe-4S Mo/W bis-MGD-type domain occupies 44–100 (VRWDKAPCRFCGTGCAVMVGVQEGKVVATQGDPEAPVNRGLNCIKGYFLSKIMYGRD). [4Fe-4S] cluster is bound by residues cysteine 51, cysteine 54, cysteine 58, and cysteine 86. Mo-bis(molybdopterin guanine dinucleotide)-binding positions include lysine 88, glutamine 155, asparagine 180, cysteine 184, 217–224 (WGSNMAEM), 248–252 (STYEH), and 267–269 (QTD). Residues 317 to 338 (DATSNGYPGADGKPKGNPNDST) are disordered. Mo-bis(molybdopterin guanine dinucleotide) is bound by residues methionine 388, glutamine 392, asparagine 498, 524–525 (SD), lysine 547, aspartate 574, and 741–750 (TGRVLEHWHT). A substrate-binding site is contributed by phenylalanine 817. Mo-bis(molybdopterin guanine dinucleotide) contacts are provided by asparagine 825 and lysine 842.

Belongs to the prokaryotic molybdopterin-containing oxidoreductase family. NasA/NapA/NarB subfamily. In terms of assembly, component of the periplasmic nitrate reductase NapAB complex composed of NapA and NapB. Requires [4Fe-4S] cluster as cofactor. The cofactor is Mo-bis(molybdopterin guanine dinucleotide). Post-translationally, predicted to be exported by the Tat system. The position of the signal peptide cleavage has not been experimentally proven.

It localises to the periplasm. It catalyses the reaction 2 Fe(II)-[cytochrome] + nitrate + 2 H(+) = 2 Fe(III)-[cytochrome] + nitrite + H2O. Catalytic subunit of the periplasmic nitrate reductase complex NapAB. Receives electrons from NapB and catalyzes the reduction of nitrate to nitrite. This chain is Periplasmic nitrate reductase, found in Leptothrix cholodnii (strain ATCC 51168 / LMG 8142 / SP-6) (Leptothrix discophora (strain SP-6)).